The following is a 1212-amino-acid chain: DNA-directed RNA polymerase subunit beta'' (1212 aa).

Residues Cys-229, Cys-302, Cys-309, and Cys-312 each contribute to the Zn(2+) site. The disordered stretch occupies residues 1162-1212 (QKETSKNKKETSKNKKETSKNKKETSKNKKETSKNKKETSKNKKEASKNKK).

This sequence belongs to the RNA polymerase beta' chain family. RpoC2 subfamily. In terms of assembly, in plastids the minimal PEP RNA polymerase catalytic core is composed of four subunits: alpha, beta, beta', and beta''. When a (nuclear-encoded) sigma factor is associated with the core the holoenzyme is formed, which can initiate transcription. Zn(2+) is required as a cofactor.

It is found in the plastid. It localises to the chloroplast. The enzyme catalyses RNA(n) + a ribonucleoside 5'-triphosphate = RNA(n+1) + diphosphate. In terms of biological role, DNA-dependent RNA polymerase catalyzes the transcription of DNA into RNA using the four ribonucleoside triphosphates as substrates. The polypeptide is DNA-directed RNA polymerase subunit beta'' (Cryptomeria japonica (Japanese cedar)).